Reading from the N-terminus, the 162-residue chain is Protein-export protein SecB (162 aa).

Belongs to the SecB family. In terms of assembly, homotetramer, a dimer of dimers. One homotetramer interacts with 1 SecA dimer.

It is found in the cytoplasm. In terms of biological role, one of the proteins required for the normal export of preproteins out of the cell cytoplasm. It is a molecular chaperone that binds to a subset of precursor proteins, maintaining them in a translocation-competent state. It also specifically binds to its receptor SecA. In Legionella pneumophila (strain Paris), this protein is Protein-export protein SecB.